The following is a 200-amino-acid chain: Segregation and condensation protein B (200 aa).

The protein belongs to the ScpB family. As to quaternary structure, homodimer. Homodimerization may be required to stabilize the binding of ScpA to the Smc head domains. Component of a cohesin-like complex composed of ScpA, ScpB and the Smc homodimer, in which ScpA and ScpB bind to the head domain of Smc. The presence of the three proteins is required for the association of the complex with DNA.

It is found in the cytoplasm. Participates in chromosomal partition during cell division. May act via the formation of a condensin-like complex containing Smc and ScpA that pull DNA away from mid-cell into both cell halves. In Lactobacillus delbrueckii subsp. bulgaricus (strain ATCC 11842 / DSM 20081 / BCRC 10696 / JCM 1002 / NBRC 13953 / NCIMB 11778 / NCTC 12712 / WDCM 00102 / Lb 14), this protein is Segregation and condensation protein B.